We begin with the raw amino-acid sequence, 360 residues long: Peptide chain release factor 1 (360 aa).

Gln235 is subject to N5-methylglutamine. Positions 283–308 are enriched in basic and acidic residues; sequence MQKRQQAEASERRNLLGSGDRSDRNR. A disordered region spans residues 283–313; that stretch reads MQKRQQAEASERRNLLGSGDRSDRNRTYNFP.

This sequence belongs to the prokaryotic/mitochondrial release factor family. Post-translationally, methylated by PrmC. Methylation increases the termination efficiency of RF1.

Its subcellular location is the cytoplasm. In terms of biological role, peptide chain release factor 1 directs the termination of translation in response to the peptide chain termination codons UAG and UAA. The sequence is that of Peptide chain release factor 1 from Yersinia enterocolitica serotype O:8 / biotype 1B (strain NCTC 13174 / 8081).